The chain runs to 699 residues: DnaJ homolog subfamily C member 14 (699 aa).

The disordered stretch occupies residues 1–230 (MAQKHPGEGG…RHRLGRKRSQ (230 aa)). The segment covering 75 to 84 (HGPPRGPGPP) has biased composition (pro residues). Residues 86–102 (AEEDPDQSEASSEESGV) show a composition bias toward acidic residues. The segment covering 117 to 133 (DGNSSFLSIPSTCNCQG) has biased composition (polar residues). Residues 163–176 (GEDEELEGEYDEEE) are compositionally biased toward acidic residues. A compositionally biased stretch (basic and acidic residues) spans 203–218 (PAKEDTREGGRRDPRS). The segment covering 219-228 (PGRHRLGRKR) has biased composition (basic residues). Helical transmembrane passes span 251–271 (AGFW…ETCG), 301–321 (GWAQ…AGLF), and 327–347 (LVGA…QLGW). The J domain occupies 444–508 (NPFHVLGVEA…ERRKEYEMKR (65 aa)). The disordered stretch occupies residues 655-699 (MSNGNFFAAPQPGPGATAASKPNSTVPKGEAKPKRRKKVRRPFQR). Over residues 662-673 (AAPQPGPGATAA) the composition is skewed to low complexity. Over residues 687-699 (PKRRKKVRRPFQR) the composition is skewed to basic residues.

Interacts with the FxxxFxxxF motif of DRD1 via its C-terminal domain. Interacts with pestivirus nonstructural protein NS2.

Its subcellular location is the endoplasmic reticulum membrane. Regulates the export of target proteins, such as DRD1, from the endoplasmic reticulum to the cell surface. Promotes cleavage of pestivirus polyprotein. This chain is DnaJ homolog subfamily C member 14 (DNAJC14), found in Bos taurus (Bovine).